Consider the following 139-residue polypeptide: Small ribosomal subunit protein uS12m (139 aa).

The N-terminal 29 residues, 1 to 29 (MSWPGLLYGLTTSLSRGLALAPQLWAARS), are a transit peptide targeting the mitochondrion.

Belongs to the universal ribosomal protein uS12 family. As to quaternary structure, component of the mitochondrial ribosome small subunit (28S) which comprises a 12S rRNA and about 30 distinct proteins.

Its subcellular location is the mitochondrion. This is Small ribosomal subunit protein uS12m (Mrps12) from Mus musculus (Mouse).